Consider the following 312-residue polypeptide: Very-long-chain 3-oxoacyl-CoA reductase (312 aa).

A helical transmembrane segment spans residues 4-24 (ALPAAGFLYWVGAGTVAYLAL). Residue 50-79 (GEWAVVTGGTDGIGKSYAEELAKRGMKVVL) coordinates NADP(+). 2 helical membrane-spanning segments follow: residues 182–202 (GAIL…LTIY) and 271–291 (GYLI…WIYL). S189 contacts substrate. Residue Y202 is the Proton acceptor of the active site. Residues 308 to 312 (KIKKN) carry the Di-lysine motif motif.

Belongs to the short-chain dehydrogenases/reductases (SDR) family. 17-beta-HSD 3 subfamily.

It localises to the endoplasmic reticulum membrane. It catalyses the reaction a very-long-chain (3R)-3-hydroxyacyl-CoA + NADP(+) = a very-long-chain 3-oxoacyl-CoA + NADPH + H(+). The catalysed reaction is 17beta-estradiol + NAD(+) = estrone + NADH + H(+). The enzyme catalyses 17beta-estradiol + NADP(+) = estrone + NADPH + H(+). It carries out the reaction 3-oxooctadecanoyl-CoA + NADPH + H(+) = (3R)-hydroxyoctadecanoyl-CoA + NADP(+). It catalyses the reaction (7Z,10Z,13Z,16Z)-3-oxodocosatetraenoyl-CoA + NADPH + H(+) = (3R)-hydroxy-(7Z,10Z,13Z,16Z)-docosatetraenoyl-CoA + NADP(+). The catalysed reaction is 3-oxo-(7Z,10Z,13Z,16Z,19Z)-docosapentaenoyl-CoA + NADPH + H(+) = (3R)-hydroxy-(7Z,10Z,13Z,16Z,19Z)-docosapentaenoyl-CoA + NADP(+). The enzyme catalyses (8Z,11Z,14Z)-3-oxoeicosatrienoyl-CoA + NADPH + H(+) = (3R)-hydroxy-(8Z,11Z,14Z)-eicosatrienoyl-CoA + NADP(+). It functions in the pathway lipid metabolism; fatty acid biosynthesis. It participates in steroid biosynthesis; estrogen biosynthesis. Functionally, catalyzes the second of the four reactions of the long-chain fatty acids elongation cycle. This endoplasmic reticulum-bound enzymatic process, allows the addition of two carbons to the chain of long- and very long-chain fatty acids/VLCFAs per cycle. This enzyme has a 3-ketoacyl-CoA reductase activity, reducing 3-ketoacyl-CoA to 3-hydroxyacyl-CoA, within each cycle of fatty acid elongation. Thereby, it may participate in the production of VLCFAs of different chain lengths that are involved in multiple biological processes as precursors of membrane lipids and lipid mediators. May also catalyze the transformation of estrone (E1) into estradiol (E2) and play a role in estrogen formation. The protein is Very-long-chain 3-oxoacyl-CoA reductase (HSD17B12) of Macaca fascicularis (Crab-eating macaque).